The primary structure comprises 297 residues: PsbP domain-containing protein 5, chloroplastic (297 aa).

Belongs to the PsbP family.

It is found in the plastid. The protein resides in the chloroplast thylakoid lumen. In terms of biological role, involved in strigolactone biosynthesis. The sequence is that of PsbP domain-containing protein 5, chloroplastic (PPD5) from Arabidopsis thaliana (Mouse-ear cress).